Reading from the N-terminus, the 488-residue chain is Multidrug resistance outer membrane protein MdtP (488 aa).

Residues 1 to 23 form the signal peptide; that stretch reads MINRQLSRLLLCSILGSTTLISG. C24 carries N-palmitoyl cysteine lipidation. Residue C24 is the site of S-diacylglycerol cysteine attachment.

The protein belongs to the outer membrane factor (OMF) (TC 1.B.17) family. As to quaternary structure, could be part of a tripartite efflux system composed of MdtN, MdtO and MdtP.

It is found in the cell outer membrane. In terms of biological role, could be involved in resistance to puromycin, acriflavine and tetraphenylarsonium chloride. This Escherichia coli (strain K12) protein is Multidrug resistance outer membrane protein MdtP (mdtP).